The sequence spans 345 residues: S-adenosylmethionine:tRNA ribosyltransferase-isomerase (345 aa).

Belongs to the QueA family. Monomer.

It localises to the cytoplasm. It carries out the reaction 7-aminomethyl-7-carbaguanosine(34) in tRNA + S-adenosyl-L-methionine = epoxyqueuosine(34) in tRNA + adenine + L-methionine + 2 H(+). It participates in tRNA modification; tRNA-queuosine biosynthesis. Functionally, transfers and isomerizes the ribose moiety from AdoMet to the 7-aminomethyl group of 7-deazaguanine (preQ1-tRNA) to give epoxyqueuosine (oQ-tRNA). This chain is S-adenosylmethionine:tRNA ribosyltransferase-isomerase, found in Helicobacter pylori (strain HPAG1).